We begin with the raw amino-acid sequence, 41 residues long: Large ribosomal subunit protein bL36 (41 aa).

The protein belongs to the bacterial ribosomal protein bL36 family.

This Orientia tsutsugamushi (strain Boryong) (Rickettsia tsutsugamushi) protein is Large ribosomal subunit protein bL36.